A 252-amino-acid polypeptide reads, in one-letter code: Flavin-dependent thymidylate synthase (252 aa).

Positions 7 to 235 (LDVQLVACST…PTVFSDFETS (229 aa)) constitute a ThyX domain. DUMP contacts are provided by residues 94–97 (ELVR), 105–109 (QLSQR), and arginine 174. FAD-binding positions include 97–99 (RHR) and glutamine 105. The ThyX motif motif lies at 97-107 (RHRHFSFSQLS). Residues 190–192 (NFR) and histidine 196 contribute to the FAD site. Arginine 201 lines the dUMP pocket. Arginine 201 (involved in ionization of N3 of dUMP, leading to its activation) is an active-site residue.

The protein belongs to the thymidylate synthase ThyX family. Homotetramer. Requires FAD as cofactor.

It carries out the reaction dUMP + (6R)-5,10-methylene-5,6,7,8-tetrahydrofolate + NADPH + H(+) = dTMP + (6S)-5,6,7,8-tetrahydrofolate + NADP(+). The protein operates within pyrimidine metabolism; dTTP biosynthesis. In terms of biological role, catalyzes the reductive methylation of 2'-deoxyuridine-5'-monophosphate (dUMP) to 2'-deoxythymidine-5'-monophosphate (dTMP) while utilizing 5,10-methylenetetrahydrofolate (mTHF) as the methyl donor, and NADPH and FADH(2) as the reductant. The chain is Flavin-dependent thymidylate synthase from Corynebacterium diphtheriae (strain ATCC 700971 / NCTC 13129 / Biotype gravis).